Here is a 796-residue protein sequence, read N- to C-terminus: RNA cytosine-C(5)-methyltransferase NSUN2 (796 aa).

The segment covering 1-11 (MGRRARDRRRQ) has biased composition (basic residues). The disordered stretch occupies residues 1–36 (MGRRARDRRRQLQPQQRRERSGGGGGGGDDQAGWAG). Over residues 22-36 (GGGGGGGDDQAGWAG) the composition is skewed to gly residues. S-adenosyl-L-methionine contacts are provided by residues 184 to 190 (CAAPGSK), D215, D242, and D268. Catalysis depends on C321, which acts as the Nucleophile. Disordered regions lie at residues 435 to 501 (WNKR…CGPP) and 707 to 796 (RKEG…NVKD). Composition is skewed to basic and acidic residues over residues 467–483 (ATEK…KKVQ), 708–721 (KEGE…EEVQ), and 733–746 (VEDK…KMEA). Over residues 774-783 (CSKNTNSHIN) the composition is skewed to polar residues. Positions 784–796 (QESKDMNTNNVKD) are enriched in basic and acidic residues.

This sequence belongs to the class I-like SAM-binding methyltransferase superfamily. RsmB/NOP family. TRM4 subfamily.

The protein resides in the nucleus. The protein localises to the nucleolus. It is found in the cytoplasm. Its subcellular location is the mitochondrion. It localises to the cytoskeleton. The protein resides in the spindle. The protein localises to the secreted. It is found in the extracellular exosome. The enzyme catalyses cytidine(48) in tRNA + S-adenosyl-L-methionine = 5-methylcytidine(48) in tRNA + S-adenosyl-L-homocysteine + H(+). It carries out the reaction cytidine(49) in tRNA + S-adenosyl-L-methionine = 5-methylcytidine(49) in tRNA + S-adenosyl-L-homocysteine + H(+). The catalysed reaction is cytidine(50) in tRNA + S-adenosyl-L-methionine = 5-methylcytidine(50) in tRNA + S-adenosyl-L-homocysteine + H(+). It catalyses the reaction cytidine(34) in tRNA precursor + S-adenosyl-L-methionine = 5-methylcytidine(34) in tRNA precursor + S-adenosyl-L-homocysteine + H(+). The enzyme catalyses a cytidine in mRNA + S-adenosyl-L-methionine = a 5-methylcytidine in mRNA + S-adenosyl-L-homocysteine + H(+). In terms of biological role, RNA cytosine C(5)-methyltransferase that methylates cytosine to 5-methylcytosine (m5C) in various RNAs, such as tRNAs, mRNAs and some long non-coding RNAs (lncRNAs). Involved in various processes, such as epidermal stem cell differentiation, testis differentiation and maternal to zygotic transition during early development: acts by increasing protein synthesis; cytosine C(5)-methylation promoting tRNA stability and preventing mRNA decay. Methylates cytosine to 5-methylcytosine (m5C) at positions 34 and 48 of intron-containing tRNA(Leu)(CAA) precursors, and at positions 48, 49 and 50 of tRNA(Gly)(GCC) precursors. tRNA methylation is required generation of RNA fragments derived from tRNAs (tRFs). Also mediates C(5)-methylation of mitochondrial tRNAs. Catalyzes cytosine C(5)-methylation of mRNAs, leading to stabilize them and prevent mRNA decay. Cytosine C(5)-methylation of mRNAs also regulates mRNA export. Also mediates cytosine C(5)-methylation of non-coding RNAs, such as vault RNAs (vtRNAs), promoting their processing into regulatory small RNAs. Required for proper spindle assembly and chromosome segregation, independently of its methyltransferase activity. This is RNA cytosine-C(5)-methyltransferase NSUN2 from Gallus gallus (Chicken).